The primary structure comprises 391 residues: MASGDDLKRRLTILGSTGSIGTSTLDVIERLGGRDRFEIAALTGNGNIPLLAEQARRIGAELAVTADEDRYGELKDALSGSGIEVAAGRSGLTEAAERDAGWVMAAIVGNAGLGPTLAAARRGADIALANKECLVSAGSLFIDAVAEGGGRLLPVDSEHNAIFQVLENDQRHAVERIVLTASGGPFRTKTLDEMRHVTADVARAHPNWSMGLKISIDSASMFNKALEMIEARHLFRLRPEQIEVIVHPQSVVHSMVGYTDGSVLAQLGCPDMRTAIGYALSYPKRCDLPVERLDFARLARLDFEAPDEVRFPAIKLARRAMEEGGVQGAVLNGAKETALDAFIKGRIGFLAMAEIVEKVMDGLAGLPAATSMDDVFAADERARRAAAEMIR.

NADPH contacts are provided by Thr-17, Gly-18, Ser-19, Ile-20, Asn-47, and Asn-130. A 1-deoxy-D-xylulose 5-phosphate-binding site is contributed by Lys-131. NADPH is bound at residue Glu-132. Asp-156 provides a ligand contact to Mn(2+). Residues Ser-157, Glu-158, Ser-182, and His-205 each coordinate 1-deoxy-D-xylulose 5-phosphate. Glu-158 contributes to the Mn(2+) binding site. NADPH is bound at residue Gly-211. Positions 218, 223, 224, and 227 each coordinate 1-deoxy-D-xylulose 5-phosphate. A Mn(2+)-binding site is contributed by Glu-227.

Belongs to the DXR family. Requires Mg(2+) as cofactor. The cofactor is Mn(2+).

The catalysed reaction is 2-C-methyl-D-erythritol 4-phosphate + NADP(+) = 1-deoxy-D-xylulose 5-phosphate + NADPH + H(+). It participates in isoprenoid biosynthesis; isopentenyl diphosphate biosynthesis via DXP pathway; isopentenyl diphosphate from 1-deoxy-D-xylulose 5-phosphate: step 1/6. In terms of biological role, catalyzes the NADPH-dependent rearrangement and reduction of 1-deoxy-D-xylulose-5-phosphate (DXP) to 2-C-methyl-D-erythritol 4-phosphate (MEP). The protein is 1-deoxy-D-xylulose 5-phosphate reductoisomerase of Rhizobium meliloti (strain 1021) (Ensifer meliloti).